Here is a 171-residue protein sequence, read N- to C-terminus: uncharacterized protein (171 aa).

Disordered regions lie at residues 68–124 (NKNN…ASQQ) and 140–171 (GDED…SIKN). The span at 141–160 (DEDKGMDSTLKLPERTKRDS) shows a compositional bias: basic and acidic residues.

This sequence belongs to the asfivirus H171R family.

It is found in the virion. This is an uncharacterized protein from Ornithodoros (relapsing fever ticks).